A 405-amino-acid polypeptide reads, in one-letter code: Probable tRNA sulfurtransferase (405 aa).

The region spanning 75-183 (PRAAGAAADV…QNLAYVYLET (109 aa)) is the THUMP domain. Residues 201–202 (LM), K285, G307, and Q316 each bind ATP.

This sequence belongs to the ThiI family.

The protein resides in the cytoplasm. The catalysed reaction is [ThiI sulfur-carrier protein]-S-sulfanyl-L-cysteine + a uridine in tRNA + 2 reduced [2Fe-2S]-[ferredoxin] + ATP + H(+) = [ThiI sulfur-carrier protein]-L-cysteine + a 4-thiouridine in tRNA + 2 oxidized [2Fe-2S]-[ferredoxin] + AMP + diphosphate. The enzyme catalyses [ThiS sulfur-carrier protein]-C-terminal Gly-Gly-AMP + S-sulfanyl-L-cysteinyl-[cysteine desulfurase] + AH2 = [ThiS sulfur-carrier protein]-C-terminal-Gly-aminoethanethioate + L-cysteinyl-[cysteine desulfurase] + A + AMP + 2 H(+). It participates in cofactor biosynthesis; thiamine diphosphate biosynthesis. Functionally, catalyzes the ATP-dependent transfer of a sulfur to tRNA to produce 4-thiouridine in position 8 of tRNAs, which functions as a near-UV photosensor. Also catalyzes the transfer of sulfur to the sulfur carrier protein ThiS, forming ThiS-thiocarboxylate. This is a step in the synthesis of thiazole, in the thiamine biosynthesis pathway. The sulfur is donated as persulfide by IscS. This Methanosarcina mazei (strain ATCC BAA-159 / DSM 3647 / Goe1 / Go1 / JCM 11833 / OCM 88) (Methanosarcina frisia) protein is Probable tRNA sulfurtransferase.